The chain runs to 115 residues: Large ribosomal subunit protein bL19 (115 aa).

The protein belongs to the bacterial ribosomal protein bL19 family.

In terms of biological role, this protein is located at the 30S-50S ribosomal subunit interface and may play a role in the structure and function of the aminoacyl-tRNA binding site. This is Large ribosomal subunit protein bL19 from Thermosipho melanesiensis (strain DSM 12029 / CIP 104789 / BI429).